The following is a 64-amino-acid chain: Alpha-conotoxin-like Ai1.2 (64 aa).

The first 17 residues, 1-17 (MFTVFLLVVLATTVVSS), serve as a signal peptide directing secretion. Residues 18–43 (TSGRRAFRGRNAAAKASGLVGLTDRR) constitute a propeptide that is removed on maturation. Cystine bridges form between C46/C52 and C47/C60. A ser-Xaa-Pro motif, crucial for potent interaction with nAChR region spans residues 48–50 (SDP). Position 61 is a glycine amide (G61).

Belongs to the conotoxin A superfamily. Expressed by the venom duct.

The protein resides in the secreted. Functionally, alpha-conotoxins act on postsynaptic membranes, they bind to the nicotinic acetylcholine receptors (nAChR) and thus inhibit them. The sequence is that of Alpha-conotoxin-like Ai1.2 from Conus ammiralis (Admiral cone).